A 511-amino-acid polypeptide reads, in one-letter code: Chromosomal replication initiator protein DnaA (511 aa).

The domain I, interacts with DnaA modulators stretch occupies residues 1–90 (MSVELWQQCV…KRSSAPRAAP (90 aa)). A domain II region spans residues 91 to 174 (NAPLAAAASQ…QVEGALKHTS (84 aa)). Positions 133-162 (VAAHDEPSRDSFDPMAGASSQQAPARAEQR) are disordered. Positions 135 to 144 (AHDEPSRDSF) are enriched in basic and acidic residues. The domain III, AAA+ region stretch occupies residues 175–391 (YLNRTFTFEN…GALKRVIAHS (217 aa)). Residues G219, G221, K222, and T223 each contribute to the ATP site. The tract at residues 392-511 (HFMGRDITIE…YKNLLRTLTT (120 aa)) is domain IV, binds dsDNA.

The protein belongs to the DnaA family. Oligomerizes as a right-handed, spiral filament on DNA at oriC.

The protein resides in the cytoplasm. In terms of biological role, plays an essential role in the initiation and regulation of chromosomal replication. ATP-DnaA binds to the origin of replication (oriC) to initiate formation of the DNA replication initiation complex once per cell cycle. Binds the DnaA box (a 9 base pair repeat at the origin) and separates the double-stranded (ds)DNA. Forms a right-handed helical filament on oriC DNA; dsDNA binds to the exterior of the filament while single-stranded (ss)DNA is stabiized in the filament's interior. The ATP-DnaA-oriC complex binds and stabilizes one strand of the AT-rich DNA unwinding element (DUE), permitting loading of DNA polymerase. After initiation quickly degrades to an ADP-DnaA complex that is not apt for DNA replication. Binds acidic phospholipids. The protein is Chromosomal replication initiator protein DnaA of Pseudomonas savastanoi pv. phaseolicola (strain 1448A / Race 6) (Pseudomonas syringae pv. phaseolicola (strain 1448A / Race 6)).